The primary structure comprises 148 residues: Sec-independent protein translocase protein TatB (148 aa).

The helical transmembrane segment at 1-21 threads the bilayer; the sequence is MFDIGFWELVVIGIVALVVLG.

This sequence belongs to the TatB family. In terms of assembly, the Tat system comprises two distinct complexes: a TatABC complex, containing multiple copies of TatA, TatB and TatC subunits, and a separate TatA complex, containing only TatA subunits. Substrates initially bind to the TatABC complex, which probably triggers association of the separate TatA complex to form the active translocon.

It is found in the cell inner membrane. In terms of biological role, part of the twin-arginine translocation (Tat) system that transports large folded proteins containing a characteristic twin-arginine motif in their signal peptide across membranes. Together with TatC, TatB is part of a receptor directly interacting with Tat signal peptides. TatB may form an oligomeric binding site that transiently accommodates folded Tat precursor proteins before their translocation. This is Sec-independent protein translocase protein TatB from Aeromonas salmonicida (strain A449).